Reading from the N-terminus, the 420-residue chain is UDP-N-acetylmuramoylalanine--D-glutamate ligase (420 aa).

ATP is bound at residue 109–115 (GSAGKTT).

It belongs to the MurCDEF family.

The protein localises to the cytoplasm. It carries out the reaction UDP-N-acetyl-alpha-D-muramoyl-L-alanine + D-glutamate + ATP = UDP-N-acetyl-alpha-D-muramoyl-L-alanyl-D-glutamate + ADP + phosphate + H(+). The protein operates within cell wall biogenesis; peptidoglycan biosynthesis. Cell wall formation. Catalyzes the addition of glutamate to the nucleotide precursor UDP-N-acetylmuramoyl-L-alanine (UMA). In Chlamydia abortus (strain DSM 27085 / S26/3) (Chlamydophila abortus), this protein is UDP-N-acetylmuramoylalanine--D-glutamate ligase.